The chain runs to 157 residues: Protein TIFY 8 (157 aa).

Residues 33-68 (VPGTTEQLTIFYSGSMVKFDNVPREKIRYACRLRRL) enclose the Tify domain. The segment at 126-147 (SIGAQRTGTPPSRRRIHARGKS) is disordered. Positions 137-147 (SRRRIHARGKS) are enriched in basic residues.

This sequence belongs to the TIFY/JAZ family. Post-translationally, ubiquitinated. Targeted for degradation by the SCF(COI1) E3 ubiquitin ligase-proteasome pathway during jasmonate signaling.

In terms of biological role, repressor of jasmonate responses. The protein is Protein TIFY 8 of Oryza sativa subsp. japonica (Rice).